We begin with the raw amino-acid sequence, 339 residues long: Pyrimidine monooxygenase RutA (339 aa).

FMN-binding positions include 26 to 27, Asn-92, Glu-101, 117 to 118, and Ser-167; these read IK and RY.

The protein belongs to the NtaA/SnaA/DszA monooxygenase family. RutA subfamily.

The enzyme catalyses uracil + FMNH2 + NADH + O2 = (Z)-3-ureidoacrylate + FMN + NAD(+) + H2O + H(+). It catalyses the reaction thymine + FMNH2 + NADH + O2 = (Z)-2-methylureidoacrylate + FMN + NAD(+) + H2O + H(+). Functionally, catalyzes the pyrimidine ring opening between N-3 and C-4 by an unusual flavin hydroperoxide-catalyzed mechanism, adding oxygen atoms in the process to yield ureidoacrylate peracid, that immediately reacts with FMN forming ureidoacrylate and FMN-N(5)-oxide. The FMN-N(5)-oxide reacts spontaneously with NADH to produce FMN. Requires the flavin reductase RutF to regenerate FMN in vivo. The protein is Pyrimidine monooxygenase RutA of Cronobacter sakazakii (strain ATCC BAA-894) (Enterobacter sakazakii).